Consider the following 719-residue polypeptide: DNA ligase (719 aa).

Residues 42-46 (DAEYD), 91-92 (SL), and E125 each bind NAD(+). K127 (N6-AMP-lysine intermediate) is an active-site residue. NAD(+) is bound by residues R148, E184, K300, and K324. Zn(2+)-binding residues include C429, C432, C447, and C453. The BRCT domain maps to 638 to 719 (TASSPIAEKI…WMRLIKGHNI (82 aa)).

The protein belongs to the NAD-dependent DNA ligase family. LigA subfamily. Mg(2+) is required as a cofactor. The cofactor is Mn(2+).

The enzyme catalyses NAD(+) + (deoxyribonucleotide)n-3'-hydroxyl + 5'-phospho-(deoxyribonucleotide)m = (deoxyribonucleotide)n+m + AMP + beta-nicotinamide D-nucleotide.. In terms of biological role, DNA ligase that catalyzes the formation of phosphodiester linkages between 5'-phosphoryl and 3'-hydroxyl groups in double-stranded DNA using NAD as a coenzyme and as the energy source for the reaction. It is essential for DNA replication and repair of damaged DNA. In Bartonella tribocorum (strain CIP 105476 / IBS 506), this protein is DNA ligase.